Reading from the N-terminus, the 486-residue chain is Transcription factor VOZ1 (486 aa).

A VOZ region spans residues 208–405 (PPSAFLGPKC…VDGKKTSKGK (198 aa)). Cys217, Cys222, Cys236, and His240 together coordinate Zn(2+). The C3H1-type; atypical zinc finger occupies 217-240 (CALWDCPRPAQGFDWFQDYCSSFH). The segment at 424–445 (EFPPENNTTNTTNNNKRCIKGR) is disordered. The segment covering 429-438 (NNTTNTTNNN) has biased composition (low complexity).

Homodimer. Interacts with phytochrome B (phyB). Ubiquitous. Expressed in the vascular bundles of various tissues, specifically in the phloem.

It localises to the cytoplasm. The protein localises to the nucleus. Its function is as follows. Transcriptional activator acting positively in the phytochrome B signaling pathway. Functions redundantly with VOZ2 to promote flowering downstream of phytochrome B (phyB). Down-regulates 'FLOWERING LOCUS C' (FLC) and up-regulates 'FLOWERING LOCUS T' (FT). Binds to the 38-bp cis-acting region of the AVP1 gene. Interacts with phyB in the cytoplasm and is translocated to the nucleus at signal transmission, where it is subjected to degradation in a phytochrome-dependent manner. This Arabidopsis thaliana (Mouse-ear cress) protein is Transcription factor VOZ1 (VOZ1).